The sequence spans 270 residues: Indole-3-glycerol phosphate synthase (270 aa).

This sequence belongs to the TrpC family.

The catalysed reaction is 1-(2-carboxyphenylamino)-1-deoxy-D-ribulose 5-phosphate + H(+) = (1S,2R)-1-C-(indol-3-yl)glycerol 3-phosphate + CO2 + H2O. It participates in amino-acid biosynthesis; L-tryptophan biosynthesis; L-tryptophan from chorismate: step 4/5. The sequence is that of Indole-3-glycerol phosphate synthase from Salinibacter ruber (strain DSM 13855 / M31).